Here is a 62-residue protein sequence, read N- to C-terminus: Disintegrin atropoimin (62 aa).

The 62-residue stretch at 1–62 (EAGEECDCGT…ADCPRNGLYG (62 aa)) folds into the Disintegrin domain. Intrachain disulfides connect cysteine 6-cysteine 21, cysteine 8-cysteine 16, cysteine 15-cysteine 38, cysteine 29-cysteine 35, and cysteine 34-cysteine 48. Residues 41–42 (GD) carry the Cell attachment site motif.

The protein belongs to the venom metalloproteinase (M12B) family. P-II subfamily. P-IIa sub-subfamily. As to quaternary structure, monomer. As to expression, expressed by the venom gland.

Its subcellular location is the secreted. Its function is as follows. Inhibits ADP- (IC(50)=63 nM) and collagen-induced (IC(50)=53 nM) aggregation of human platelets. In vitro, inhibits adhesion of endothelial cells to vitronectin, type-I collagen and, to a lower degree, fibronectin and laminin. This is Disintegrin atropoimin from Metlapilcoatlus mexicanus (Central American jumping pitviper).